The primary structure comprises 416 residues: Chromate transport protein (416 aa).

The interval Met1–Ala21 is disordered. A run of 11 helical transmembrane segments spans residues Leu99–Leu119, Phe128–Ile148, Leu160–Ile177, Asp181–Leu198, Ala204–Pro224, Ala237–Ala257, Leu283–Val303, Ile308–Phe328, Leu341–Ile361, Val371–Trp391, and Leu395–Gln415.

Belongs to the chromate ion transporter (CHR) (TC 2.A.51) family.

Its subcellular location is the cell inner membrane. This protein reduces chromate accumulation and is essential for chromate resistance. This Pseudomonas aeruginosa protein is Chromate transport protein.